The sequence spans 416 residues: 3-isopropylmalate dehydratase large subunit (416 aa).

[4Fe-4S] cluster is bound by residues cysteine 299, cysteine 357, and cysteine 360.

This sequence belongs to the aconitase/IPM isomerase family. LeuC type 2 subfamily. As to quaternary structure, heterodimer of LeuC and LeuD. The cofactor is [4Fe-4S] cluster.

It catalyses the reaction (2R,3S)-3-isopropylmalate = (2S)-2-isopropylmalate. It functions in the pathway amino-acid biosynthesis; L-leucine biosynthesis; L-leucine from 3-methyl-2-oxobutanoate: step 2/4. Its function is as follows. Catalyzes the isomerization between 2-isopropylmalate and 3-isopropylmalate, via the formation of 2-isopropylmaleate. In Saccharolobus solfataricus (strain ATCC 35092 / DSM 1617 / JCM 11322 / P2) (Sulfolobus solfataricus), this protein is 3-isopropylmalate dehydratase large subunit.